We begin with the raw amino-acid sequence, 313 residues long: D-alanine--D-alanine ligase (313 aa).

Positions 108 to 308 constitute an ATP-grasp domain; the sequence is KLVWQQTGVP…YSELVVKVLS (201 aa). An ATP-binding site is contributed by 138–193; the sequence is VAKLGLPLFVKPASEGSSVAVLKVKTADALPAALAEAATHDKIVIVEKSIEGGGEY. Mg(2+)-binding residues include aspartate 262, glutamate 275, and asparagine 277.

This sequence belongs to the D-alanine--D-alanine ligase family. Mg(2+) serves as cofactor. It depends on Mn(2+) as a cofactor.

The protein resides in the cytoplasm. It catalyses the reaction 2 D-alanine + ATP = D-alanyl-D-alanine + ADP + phosphate + H(+). Its pathway is cell wall biogenesis; peptidoglycan biosynthesis. Its function is as follows. Cell wall formation. This chain is D-alanine--D-alanine ligase, found in Burkholderia cenocepacia (strain HI2424).